The following is a 55-amino-acid chain: ATP synthase F(0) complex subunit 8 (55 aa).

A helical transmembrane segment spans residues 8–24 (PWFMIMLMTWFTYSLLI).

The protein belongs to the ATPase protein 8 family. As to quaternary structure, component of the ATP synthase complex composed at least of ATP5F1A/subunit alpha, ATP5F1B/subunit beta, ATP5MC1/subunit c (homooctomer), MT-ATP6/subunit a, MT-ATP8/subunit 8, ATP5ME/subunit e, ATP5MF/subunit f, ATP5MG/subunit g, ATP5MK/subunit k, ATP5MJ/subunit j, ATP5F1C/subunit gamma, ATP5F1D/subunit delta, ATP5F1E/subunit epsilon, ATP5PF/subunit F6, ATP5PB/subunit b, ATP5PD/subunit d, ATP5PO/subunit OSCP. ATP synthase complex consists of a soluble F(1) head domain (subunits alpha(3) and beta(3)) - the catalytic core - and a membrane F(0) domain - the membrane proton channel (subunits c, a, 8, e, f, g, k and j). These two domains are linked by a central stalk (subunits gamma, delta, and epsilon) rotating inside the F1 region and a stationary peripheral stalk (subunits F6, b, d, and OSCP).

Its subcellular location is the mitochondrion membrane. Subunit 8, of the mitochondrial membrane ATP synthase complex (F(1)F(0) ATP synthase or Complex V) that produces ATP from ADP in the presence of a proton gradient across the membrane which is generated by electron transport complexes of the respiratory chain. ATP synthase complex consist of a soluble F(1) head domain - the catalytic core - and a membrane F(1) domain - the membrane proton channel. These two domains are linked by a central stalk rotating inside the F(1) region and a stationary peripheral stalk. During catalysis, ATP synthesis in the catalytic domain of F(1) is coupled via a rotary mechanism of the central stalk subunits to proton translocation. In vivo, can only synthesize ATP although its ATP hydrolase activity can be activated artificially in vitro. Part of the complex F(0) domain. In Coturnix japonica (Japanese quail), this protein is ATP synthase F(0) complex subunit 8.